The chain runs to 325 residues: Bifunctional ligase/repressor BirA (325 aa).

Positions 23–42 form a DNA-binding region, H-T-H motif; that stretch reads GQKISDALGCSRTAVWKHIE. Positions 74–262 constitute a BPL/LPL catalytic domain; that stretch reads RFGLKTEVMG…CFEKRYRDYM (189 aa). Biotin is bound by residues Gln-118, 122 to 124, and Lys-189; that span reads RGR.

It belongs to the biotin--protein ligase family.

It carries out the reaction biotin + L-lysyl-[protein] + ATP = N(6)-biotinyl-L-lysyl-[protein] + AMP + diphosphate + H(+). In terms of biological role, acts both as a biotin--[acetyl-CoA-carboxylase] ligase and a repressor. This is Bifunctional ligase/repressor BirA from Bacillus spizizenii (strain ATCC 23059 / NRRL B-14472 / W23) (Bacillus subtilis subsp. spizizenii).